Consider the following 216-residue polypeptide: MSITAAQVNELRKATGAGLMDCKKALTETGGDHEQAVDYLRKKGLAAASKKSGRVATEGLVGSYIHAGGKIGVLVEVNCETDFVAKNENFQAFVKDIAMHIAAASPLYVRREEVDPDVLEREKAIYRAKAKESGKPDNIVEKIIEGQVNKFYADICLLEQPFVKDSDKTVQTYLNETIAAIGENISIRRFAKFTLGEGLAKKESDFAAEVAAAAGV.

The tract at residues 81-84 is involved in Mg(2+) ion dislocation from EF-Tu; sequence TDFV.

This sequence belongs to the EF-Ts family.

The protein resides in the cytoplasm. In terms of biological role, associates with the EF-Tu.GDP complex and induces the exchange of GDP to GTP. It remains bound to the aminoacyl-tRNA.EF-Tu.GTP complex up to the GTP hydrolysis stage on the ribosome. This Geotalea uraniireducens (strain Rf4) (Geobacter uraniireducens) protein is Elongation factor Ts.